We begin with the raw amino-acid sequence, 570 residues long: Ribosome-inactivating protein SNAIf (570 aa).

Positions 1-28 (MRVVTKLLYLVVLAICGLGIHGALTHTR) are cleaved as a signal peptide. N-linked (GlcNAc...) asparagine glycosylation is found at N40, N62, and N140. E199 is an active-site residue. N-linked (GlcNAc...) asparagine glycosylation occurs at N232. 3 cysteine pairs are disulfide-bonded: C284/C316, C332/C351, and C373/C385. Ricin B-type lectin domains are found at residues 319–439 (VEVT…WTVG) and 441–566 (VEPL…WITT). A 1-alpha repeat occupies 329-369 (DGLCVDVRDGHYIDGNTVQLGPCGNECNQLWTFRTDGTIRW). Residues 370-405 (LGKCLTTSSSVMIYDCNTVPPEATKWVVSTDGTITN) form a 1-beta repeat. The stretch at 408–440 (SGLVLTAPQAAEGTALSLENNIHAARQGWTVGD) is one 1-gamma repeat. The stretch at 452-489 (KQMCLTENGENNFVWLEDCVLNRVEQEWALYGDGTIRV) is one 2-alpha repeat. Residues C455 and C470 are joined by a disulfide bond. N492 carries an N-linked (GlcNAc...) asparagine glycan. One copy of the 2-beta repeat lies at 493 to 531 (RSLCVTSEDHEPSDLIVILKCEGSGNQRWVFNTNGTISN). A disulfide bond links C496 and C513. N-linked (GlcNAc...) asparagine glycans are attached at residues N526 and N544. Residues 534-567 (AKLVMDVAQSNVSLRKIILYPPTGNPNQQWITTT) form a 2-gamma repeat.

It belongs to the ribosome-inactivating protein family. Type 2 RIP subfamily. As to quaternary structure, tetramer of four pairs of disulfide bound A-B chains. The precursor is processed in two chains, A and B, that are linked by a disulfide bond. A small truncated form corresponding roughly to the second ricin B-type lectin domain of the B chain, TrSNAIf, can also be produced. In terms of processing, N-glycosylated. As to expression, expressed in fruits.

The catalysed reaction is Endohydrolysis of the N-glycosidic bond at one specific adenosine on the 28S rRNA.. Functionally, neu5Ac(alpha2-6)Gal/GalNAc specific agglutinin. Behaves as a type-2 ribosome-inactivating protein. Strongly inhibits mammalian but not plant ribosomes. The A chain is responsible for inhibiting protein synthesis through the catalytic inactivation of 60S ribosomal subunits by removing adenine from position 4,324 of 28S rRNA. The B chain binds to cell receptors and probably facilitates the entry into the cell of the A chain; B chains are also responsible for cell agglutination (lectin activity). Involved in plant defense against insects. In terms of biological role, binds Neu5Ac(alpha2-6)Gal/GalNAc but has no clear agglutination activity. The polypeptide is Ribosome-inactivating protein SNAIf (Sambucus nigra (European elder)).